Consider the following 377-residue polypeptide: MAKKDYYQILGIPKSAEEREIKKAYKKLAMKYHPDRNQGDKTAEGKFKEIKEAYEILINEEKRSAYDQYGHAAFENGQSNSTYSTFTNSADFSDIFGDVFGDIFGGNRTQRAKKGADLCYNMEITLEEAVKGIKKEIQIPTLQKCKTCYGSGTRTGTKPRSCSTCHGKGQIHIRKGFFTVQQSCPTCHGKGTIIADPCNLCHGQGRVETYKILSVKIPPGLDTNDRIRLNNEGEAGANGAQSGDLYVQITVKKHPIFEREGNNLYCEVPINFTMAALGGEIEVPTLDGRVKLKIPYETQSGKLFRIRGRGVKSVQNRNQGDLLCRVVVETPVNLNEQQKNLLHELGNSFHGFRGEKNSPRSKRFFDGVKRFFDDLTR.

The region spanning 5–70 (DYYQILGIPK…EKRSAYDQYG (66 aa)) is the J domain. A CR-type zinc finger spans residues 132–210 (GIKKEIQIPT…CHGQGRVETY (79 aa)). 8 residues coordinate Zn(2+): C145, C148, C162, C165, C184, C187, C198, and C201. CXXCXGXG motif repeat units lie at residues 145–152 (CKTCYGSG), 162–169 (CSTCHGKG), 184–191 (CPTCHGKG), and 198–205 (CNLCHGQG).

The protein belongs to the DnaJ family. As to quaternary structure, homodimer. Requires Zn(2+) as cofactor.

It is found in the cytoplasm. Participates actively in the response to hyperosmotic and heat shock by preventing the aggregation of stress-denatured proteins and by disaggregating proteins, also in an autonomous, DnaK-independent fashion. Unfolded proteins bind initially to DnaJ; upon interaction with the DnaJ-bound protein, DnaK hydrolyzes its bound ATP, resulting in the formation of a stable complex. GrpE releases ADP from DnaK; ATP binding to DnaK triggers the release of the substrate protein, thus completing the reaction cycle. Several rounds of ATP-dependent interactions between DnaJ, DnaK and GrpE are required for fully efficient folding. Also involved, together with DnaK and GrpE, in the DNA replication of plasmids through activation of initiation proteins. The polypeptide is Chaperone protein DnaJ (Buchnera aphidicola subsp. Acyrthosiphon pisum (strain Tuc7)).